The chain runs to 234 residues: Ubiquitin domain-containing protein 2 (234 aa).

A disordered region spans residues 1–46 (MGGCVGAQHDSSGSLNENSDGTGVALGRNQPLKKEKPKWKSDYPMT). Over residues 9-21 (HDSSGSLNENSDG) the composition is skewed to polar residues. Positions 32 to 41 (LKKEKPKWKS) are enriched in basic and acidic residues. The region spanning 152-227 (SQLRLRLSTG…VQVIVSQPVQ (76 aa)) is the Ubiquitin-like domain.

It is found in the cytoplasm. This chain is Ubiquitin domain-containing protein 2 (Ubtd2), found in Mus musculus (Mouse).